We begin with the raw amino-acid sequence, 202 residues long: uncharacterized protein (202 aa).

A helical transmembrane segment spans residues 175–195; the sequence is INTGIALFIILTSLLVYFIQF.

Its subcellular location is the membrane. This is an uncharacterized protein from Dictyostelium discoideum (Social amoeba).